We begin with the raw amino-acid sequence, 84 residues long: Small ribosomal subunit protein uS17 (84 aa).

The protein belongs to the universal ribosomal protein uS17 family. As to quaternary structure, part of the 30S ribosomal subunit.

Its function is as follows. One of the primary rRNA binding proteins, it binds specifically to the 5'-end of 16S ribosomal RNA. This chain is Small ribosomal subunit protein uS17, found in Caldanaerobacter subterraneus subsp. tengcongensis (strain DSM 15242 / JCM 11007 / NBRC 100824 / MB4) (Thermoanaerobacter tengcongensis).